A 374-amino-acid polypeptide reads, in one-letter code: Chaperone protein DnaJ (374 aa).

Residues Asp5–Gly71 form the J domain. The CR-type zinc finger occupies Gly132–Thr210. Zn(2+)-binding residues include Cys145, Cys148, Cys162, Cys165, Cys184, Cys187, Cys198, and Cys201. 4 CXXCXGXG motif repeats span residues Cys145–Gly152, Cys162–Gly169, Cys184–Gly191, and Cys198–Gly205.

It belongs to the DnaJ family. In terms of assembly, homodimer. Zn(2+) serves as cofactor.

Its subcellular location is the cytoplasm. Participates actively in the response to hyperosmotic and heat shock by preventing the aggregation of stress-denatured proteins and by disaggregating proteins, also in an autonomous, DnaK-independent fashion. Unfolded proteins bind initially to DnaJ; upon interaction with the DnaJ-bound protein, DnaK hydrolyzes its bound ATP, resulting in the formation of a stable complex. GrpE releases ADP from DnaK; ATP binding to DnaK triggers the release of the substrate protein, thus completing the reaction cycle. Several rounds of ATP-dependent interactions between DnaJ, DnaK and GrpE are required for fully efficient folding. Also involved, together with DnaK and GrpE, in the DNA replication of plasmids through activation of initiation proteins. The chain is Chaperone protein DnaJ from Dichelobacter nodosus (strain VCS1703A).